The following is a 1385-amino-acid chain: DNA-directed RNA polymerase subunit beta' (1385 aa).

Zn(2+) contacts are provided by Cys-75, Cys-77, Cys-90, and Cys-93. Residues Asp-466, Asp-468, and Asp-470 each contribute to the Mg(2+) site. Residues Cys-809, Cys-883, Cys-890, and Cys-893 each contribute to the Zn(2+) site.

Belongs to the RNA polymerase beta' chain family. As to quaternary structure, the RNAP catalytic core consists of 2 alpha, 1 beta, 1 beta' and 1 omega subunit. When a sigma factor is associated with the core the holoenzyme is formed, which can initiate transcription. Mg(2+) serves as cofactor. Requires Zn(2+) as cofactor.

It catalyses the reaction RNA(n) + a ribonucleoside 5'-triphosphate = RNA(n+1) + diphosphate. DNA-dependent RNA polymerase catalyzes the transcription of DNA into RNA using the four ribonucleoside triphosphates as substrates. This Nitratidesulfovibrio vulgaris (strain ATCC 29579 / DSM 644 / CCUG 34227 / NCIMB 8303 / VKM B-1760 / Hildenborough) (Desulfovibrio vulgaris) protein is DNA-directed RNA polymerase subunit beta'.